Consider the following 567-residue polypeptide: UPF0313 protein TM_0337 (567 aa).

Positions 288-560 (KAIETVKFSI…NKMKENVLFK (273 aa)) constitute a Radical SAM core domain. [4Fe-4S] cluster-binding residues include cysteine 303, cysteine 307, and cysteine 310.

Belongs to the UPF0313 family. [4Fe-4S] cluster is required as a cofactor.

This is UPF0313 protein TM_0337 from Thermotoga maritima (strain ATCC 43589 / DSM 3109 / JCM 10099 / NBRC 100826 / MSB8).